A 188-amino-acid chain; its full sequence is UPF0301 protein XCV3063 (188 aa).

The protein belongs to the UPF0301 (AlgH) family.

The chain is UPF0301 protein XCV3063 from Xanthomonas euvesicatoria pv. vesicatoria (strain 85-10) (Xanthomonas campestris pv. vesicatoria).